Reading from the N-terminus, the 441-residue chain is Histidinol dehydrogenase (441 aa).

Residues Tyr-136, Gln-197, and Asn-220 each contribute to the NAD(+) site. Substrate is bound by residues Ser-243, Gln-265, and His-268. The Zn(2+) site is built by Gln-265 and His-268. Residues Glu-333 and His-334 each act as proton acceptor in the active site. Substrate is bound by residues His-334, Asp-367, Glu-421, and His-426. Asp-367 contributes to the Zn(2+) binding site. His-426 provides a ligand contact to Zn(2+).

Belongs to the histidinol dehydrogenase family. Zn(2+) is required as a cofactor.

It catalyses the reaction L-histidinol + 2 NAD(+) + H2O = L-histidine + 2 NADH + 3 H(+). Its pathway is amino-acid biosynthesis; L-histidine biosynthesis; L-histidine from 5-phospho-alpha-D-ribose 1-diphosphate: step 9/9. Catalyzes the sequential NAD-dependent oxidations of L-histidinol to L-histidinaldehyde and then to L-histidine. The polypeptide is Histidinol dehydrogenase (Pseudomonas fluorescens (strain Pf0-1)).